The chain runs to 926 residues: Serine/threonine-protein kinase/endoribonuclease IRE2 (926 aa).

An N-terminal signal peptide occupies residues 1–34 (MASAVRGSRPWPRLGLQLQFAALLLGTLSPQVHT). The Lumenal portion of the chain corresponds to 35-430 (LRPENLLLVS…TPDSYLGLGP (396 aa)). Residues 431 to 451 (QDLLAASLTAVLLGGWILFVM) form a helical membrane-spanning segment. Residues 452-926 (RQQQPQVVEK…RRPCPGATGR (475 aa)) are Cytoplasmic-facing. A compositionally biased stretch (polar residues) spans 478–501 (DAQSLHSGASRRSQKRLQSPSKQA). The disordered stretch occupies residues 478–509 (DAQSLHSGASRRSQKRLQSPSKQAQPLDDPEA). The Protein kinase domain maps to 520-781 (FNPKDVLGRG…APQVLAHPFF (262 aa)). ATP is bound by residues 526–534 (LGRGAGGTF) and Lys-548. Asp-637 functions as the Proton acceptor in the catalytic mechanism. Residues 784–912 (RAKQLQFFQD…ESLFLPYYPP (129 aa)) form the KEN domain.

The protein belongs to the protein kinase superfamily. Ser/Thr protein kinase family. It depends on Mg(2+) as a cofactor. Post-translationally, autophosphorylated.

The protein localises to the endoplasmic reticulum membrane. It carries out the reaction L-seryl-[protein] + ATP = O-phospho-L-seryl-[protein] + ADP + H(+). The catalysed reaction is L-threonyl-[protein] + ATP = O-phospho-L-threonyl-[protein] + ADP + H(+). With respect to regulation, the kinase domain is activated by trans-autophosphorylation. Kinase activity is required for activation of the endoribonuclease domain. In terms of biological role, induces translational repression through 28S ribosomal RNA cleavage in response to ER stress. Pro-apoptotic. Appears to play no role in the unfolded-protein response, unlike closely related proteins. This Homo sapiens (Human) protein is Serine/threonine-protein kinase/endoribonuclease IRE2.